The sequence spans 467 residues: ATP synthase subunit beta (467 aa).

156 to 163 (GGAGVGKT) contributes to the ATP binding site.

It belongs to the ATPase alpha/beta chains family. As to quaternary structure, F-type ATPases have 2 components, CF(1) - the catalytic core - and CF(0) - the membrane proton channel. CF(1) has five subunits: alpha(3), beta(3), gamma(1), delta(1), epsilon(1). CF(0) has three main subunits: a(1), b(2) and c(9-12). The alpha and beta chains form an alternating ring which encloses part of the gamma chain. CF(1) is attached to CF(0) by a central stalk formed by the gamma and epsilon chains, while a peripheral stalk is formed by the delta and b chains.

The protein resides in the cell inner membrane. The enzyme catalyses ATP + H2O + 4 H(+)(in) = ADP + phosphate + 5 H(+)(out). In terms of biological role, produces ATP from ADP in the presence of a proton gradient across the membrane. The catalytic sites are hosted primarily by the beta subunits. The protein is ATP synthase subunit beta of Cupriavidus necator (strain ATCC 17699 / DSM 428 / KCTC 22496 / NCIMB 10442 / H16 / Stanier 337) (Ralstonia eutropha).